The following is a 279-amino-acid chain: Urease accessory protein UreD (279 aa).

Belongs to the UreD family. As to quaternary structure, ureD, UreF and UreG form a complex that acts as a GTP-hydrolysis-dependent molecular chaperone, activating the urease apoprotein by helping to assemble the nickel containing metallocenter of UreC. The UreE protein probably delivers the nickel.

The protein localises to the cytoplasm. Functionally, required for maturation of urease via the functional incorporation of the urease nickel metallocenter. In Streptococcus thermophilus (strain ATCC BAA-250 / LMG 18311), this protein is Urease accessory protein UreD.